Here is a 458-residue protein sequence, read N- to C-terminus: Divalent metal cation transporter MntH (458 aa).

11 consecutive transmembrane segments (helical) span residues 38 to 58 (GFWK…VGYM), 76 to 96 (SLLS…AMAA), 119 to 139 (GGFL…AEII), 151 to 171 (MPLI…LLLM), 180 to 200 (AVVA…VILA), 223 to 243 (MLYL…LFLG), 275 to 295 (LTMA…LFFG), 315 to 335 (IVGA…LLAS), 370 to 390 (LMSV…EAKI), 393 to 413 (LLTF…IPLV), and 437 to 457 (FISG…LGFV).

Belongs to the NRAMP family.

The protein resides in the cell membrane. In terms of biological role, h(+)-stimulated, divalent metal cation uptake system. This chain is Divalent metal cation transporter MntH, found in Lacticaseibacillus casei (strain BL23) (Lactobacillus casei).